The sequence spans 203 residues: Large ribosomal subunit protein bL25 (203 aa).

Belongs to the bacterial ribosomal protein bL25 family. CTC subfamily. Part of the 50S ribosomal subunit; part of the 5S rRNA/L5/L18/L25 subcomplex. Contacts the 5S rRNA. Binds to the 5S rRNA independently of L5 and L18.

Its function is as follows. This is one of the proteins that binds to the 5S RNA in the ribosome where it forms part of the central protuberance. This chain is Large ribosomal subunit protein bL25, found in Paraburkholderia phymatum (strain DSM 17167 / CIP 108236 / LMG 21445 / STM815) (Burkholderia phymatum).